Reading from the N-terminus, the 214-residue chain is MSNANNNGQATAKGGCCGGGGSQDNKANQNSGIVVSNTSTDNRNKFDKGFKLVLLGEMNTGKTCISSRLVRNEFGPTDSTIGAAFLVKSMVVDNINIKLEIWDTAGQERYRSLTPMYYRGAAAAVVVYDITKKNTFETLKRWVSELQKHASPNLILALAGNKVDLPNREVQVDEVNRYISELGNAIFFETSAASGQNINELFTEICRRLIENYK.

Glycine 56–threonine 63 is a GTP binding site. The Effector region motif lies at threonine 77–phenylalanine 85. Residues aspartate 103–glutamine 107 and asparagine 161–aspartate 164 contribute to the GTP site.

Belongs to the small GTPase superfamily. Rab family. This sequence lacks the C-terminal cysteine motifs subject to isoprenylation in other Rab proteins.

The sequence is that of Putative ras-related protein Rab-5B (rab5B) from Dictyostelium discoideum (Social amoeba).